The sequence spans 293 residues: Large ribosomal subunit protein uL18 (293 aa).

Basic and acidic residues predominate over residues 247-263 (IRANPAHEKKQPRDGLV). The segment at 247–283 (IRANPAHEKKQPRDGLVKKRWNRAKMSLKQKRDRVKQ) is disordered. Basic residues predominate over residues 264–283 (KKRWNRAKMSLKQKRDRVKQ).

This sequence belongs to the universal ribosomal protein uL18 family. Component of the large ribosomal subunit (LSU).

It localises to the cytoplasm. The protein resides in the nucleus. Functionally, component of the ribosome, a large ribonucleoprotein complex responsible for the synthesis of proteins in the cell. The small ribosomal subunit (SSU) binds messenger RNAs (mRNAs) and translates the encoded message by selecting cognate aminoacyl-transfer RNA (tRNA) molecules. The large subunit (LSU) contains the ribosomal catalytic site termed the peptidyl transferase center (PTC), which catalyzes the formation of peptide bonds, thereby polymerizing the amino acids delivered by tRNAs into a polypeptide chain. The nascent polypeptides leave the ribosome through a tunnel in the LSU and interact with protein factors that function in enzymatic processing, targeting, and the membrane insertion of nascent chains at the exit of the ribosomal tunnel. In Suberites domuncula (Sponge), this protein is Large ribosomal subunit protein uL18 (RPL5).